The sequence spans 791 residues: Splicing factor 3A subunit 1 (791 aa).

Residues 1–41 (MQAGPVQAVPPPPPVATESKQPIEEEASSKEDPTPSKPVVG) are disordered. Lys20 is covalently cross-linked (Glycyl lysine isopeptide (Lys-Gly) (interchain with G-Cter in SUMO2)). Residues 21 to 34 (QPIEEEASSKEDPT) show a composition bias toward basic and acidic residues. An SURP motif 1 repeat occupies 52-94 (IVDKTASFVARNGPEFEARIRQNEINNPKFNFLNPNDPYHAYY). An N6-acetyllysine modification is found at Lys55. A Glycyl lysine isopeptide (Lys-Gly) (interchain with G-Cter in SUMO2) cross-link involves residue Lys131. One copy of the SURP motif 2 repeat lies at 166–208 (VVKLTAQFVARNGRQFLTQLMQKEQRNYQFDFLRPQHSLFNYF). Residues 318 to 411 (GESEEVEMEV…APAPDEYLVS (94 aa)) form a disordered region. Ser320 and Ser329 each carry phosphoserine. Positions 320-336 (SEEVEMEVESDEEDQEK) are enriched in acidic residues. The segment covering 340-351 (TPSQLDQDTQVQ) has biased composition (polar residues). Positions 352–362 (DMDEGSDDEEE) are enriched in acidic residues. Ser357 carries the post-translational modification Phosphoserine. Residues 366–382 (VPPPPETPMPPPLPPTP) show a composition bias toward pro residues. Positions 386-395 (IVRKDYDPKA) are enriched in basic and acidic residues. At Ser411 the chain carries Phosphoserine. A Glycyl lysine isopeptide (Lys-Gly) (interchain with G-Cter in SUMO2) cross-link involves residue Lys422. A Phosphoserine modification is found at Ser449. The residue at position 454 (Tyr454) is a Phosphotyrosine. Residues 486–500 (IGEEEIQKPEEKVTW) are compositionally biased toward basic and acidic residues. 3 disordered regions span residues 486–516 (IGEE…AAQA), 528–582 (HKAK…AMPP), and 664–684 (PMPP…KKLK). Lys497 participates in a covalent cross-link: Glycyl lysine isopeptide (Lys-Gly) (interchain with G-Cter in SUMO2). Residue Ser506 is modified to Phosphoserine. Over residues 507-516 (MARTQQAAQA) the composition is skewed to polar residues. Lys540 is covalently cross-linked (Glycyl lysine isopeptide (Lys-Gly) (interchain with G-Cter in SUMO2)). Polar residues predominate over residues 561–570 (ATNIPSSAPP). Over residues 664–673 (PMPPVHPPPP) the composition is skewed to pro residues. Residues 678-700 (PPSKKLKTEDSLMPEEEFLRRNK) form a required and sufficient for nuclear import region. A Glycyl lysine isopeptide (Lys-Gly) (interchain with G-Cter in SUMO2) cross-link involves residue Lys684. One can recognise a Ubiquitin-like domain in the interval 705–788 (IKVQVPNMQD…IHLALKERGG (84 aa)). Phosphotyrosine is present on Tyr757.

As to quaternary structure, component of the 17S U2 SnRNP complex, a ribonucleoprotein complex that contains small nuclear RNA (snRNA) U2 and a number of specific proteins. Part of the SF3A subcomplex of the 17S U2 SnRNP complex which is composed of three subunits; SF3A3/SAP61, SF3A2/SAP62 and SF3A1/SAP114. SF3A associates with the splicing factor SF3B and a 12S RNA unit to form the mature 17S U2 small nuclear ribonucleoprotein complex (17S U2 snRNP). SF3A1 functions as a scaffold that interacts directly with both SF3A2 and SF3A3. Identified in the spliceosome 'E' complex, a precursor of the spliceosome 'A' complex. Identified in the spliceosome 'A' and 'B' complexes. Identified in the spliceosome 'C' complex. Interacts with P2RX6; resulting in a reduction of the splicing activity.

Its subcellular location is the nucleus. It localises to the nucleus speckle. Its function is as follows. Component of the 17S U2 SnRNP complex of the spliceosome, a large ribonucleoprotein complex that removes introns from transcribed pre-mRNAs. The 17S U2 SnRNP complex (1) directly participates in early spliceosome assembly and (2) mediates recognition of the intron branch site during pre-mRNA splicing by promoting the selection of the pre-mRNA branch-site adenosine, the nucleophile for the first step of splicing. Within the 17S U2 SnRNP complex, SF3A1 is part of the SF3A subcomplex that contributes to the assembly of the 17S U2 snRNP, and the subsequent assembly of the pre-spliceosome 'E' complex and the pre-catalytic spliceosome 'A' complex. Involved in pre-mRNA splicing as a component of pre-catalytic spliceosome 'B' complexes. The chain is Splicing factor 3A subunit 1 (Sf3a1) from Mus musculus (Mouse).